The primary structure comprises 710 residues: Nucleolin (710 aa).

The disordered stretch occupies residues Met-1–Pro-303. 3 positions are modified to N6-acetyllysine: Lys-9, Lys-15, and Lys-16. The segment covering Val-24 to Gly-43 has biased composition (acidic residues). Phosphoserine is present on residues Ser-28, Ser-34, Ser-41, and Ser-42. A compositionally biased stretch (low complexity) spans Ala-56–Pro-107. Repeat 1 spans residues Ala-58–Val-65. The segment at Ala-58 to Lys-135 is 8 X 8 AA tandem repeats of X-T-P-X-K-K-X-X. Ser-67 bears the Phosphoserine mark. Phosphothreonine is present on residues Thr-69, Thr-76, Thr-84, and Thr-92. Repeat copies occupy residues Ala-75–Ala-82, Val-83–Ala-90, and Ala-91–Val-98. Residue Lys-96 is modified to N6-acetyllysine. Thr-99 carries the post-translational modification Phosphothreonine. Residues Thr-99–Val-104 form a 5; truncated repeat. Lys-102 carries the post-translational modification N6-acetyllysine. Repeat unit 6 spans residues Thr-105–Ala-112. A Phosphothreonine modification is found at Thr-106. Residue Lys-109 is modified to N6-acetyllysine. Phosphothreonine is present on Thr-113. Lys-116 is subject to N6-acetyllysine. 2 repeat units span residues Ala-120–Ala-127 and Ala-128–Lys-135. At Thr-121 the chain carries Phosphothreonine. The span at Pro-122–Gly-137 shows a compositional bias: low complexity. An N6-acetyllysine modification is found at Lys-124. 2 positions are modified to phosphoserine: Ser-145 and Ser-153. Over residues Ser-145–Glu-171 the composition is skewed to acidic residues. The span at Pro-172 to Ala-183 shows a compositional bias: low complexity. Ser-184 and Ser-206 each carry phosphoserine. Acidic residues predominate over residues Ser-184–Met-211. Thr-214 is modified (phosphothreonine). Acidic residues predominate over residues Glu-234–Pro-272. Residues Val-273–Gly-300 show a composition bias toward basic and acidic residues. A Glycyl lysine isopeptide (Lys-Gly) (interchain with G-Cter in SUMO1); alternate cross-link involves residue Lys-297. Lys-297 is covalently cross-linked (Glycyl lysine isopeptide (Lys-Gly) (interchain with G-Cter in SUMO2); alternate). Thr-301 bears the Phosphothreonine mark. RRM domains lie at Phe-307–Gly-383 and Arg-393–Glu-466. Lys-318 bears the N6-acetyllysine mark. Lys-324 participates in a covalent cross-link: Glycyl lysine isopeptide (Lys-Gly) (interchain with G-Cter in SUMO1); alternate. Residue Lys-324 forms a Glycyl lysine isopeptide (Lys-Gly) (interchain with G-Cter in SUMO2); alternate linkage. Lys-348 bears the N6-acetyllysine mark. The residue at position 356 (Ser-356) is a Phosphoserine. Position 367 is a phosphothreonine (Thr-367). A Glycyl lysine isopeptide (Lys-Gly) (interchain with G-Cter in SUMO2) cross-link involves residue Lys-370. Lys-377 is covalently cross-linked (Glycyl lysine isopeptide (Lys-Gly) (interchain with G-Cter in SUMO2); alternate). Residue Lys-377 is modified to N6-acetyllysine; alternate. Residues Lys-398 and Lys-403 each carry the N6-acetyllysine modification. Thr-405 carries the phosphothreonine modification. 2 positions are modified to N6-acetyllysine: Lys-427 and Lys-444. 2 positions are modified to phosphoserine: Ser-458 and Ser-460. Lys-467 and Lys-477 each carry N6-acetyllysine. Residues Lys-486–Pro-560 form the RRM 3 domain. A Glycyl lysine isopeptide (Lys-Gly) (interchain with G-Cter in SUMO2); alternate cross-link involves residue Lys-513. At Lys-513 the chain carries N6-acetyllysine; alternate. Lys-521 carries the N6-acetyllysine modification. A Phosphoserine modification is found at Ser-563. Lys-572 is subject to N6-acetyllysine. Residues Lys-572–Pro-647 enclose the RRM 4 domain. Lys-577 is covalently cross-linked (Glycyl lysine isopeptide (Lys-Gly) (interchain with G-Cter in SUMO2); alternate). Lys-577 is subject to N6-acetyllysine; alternate. Ser-580 is modified (phosphoserine). Lys-589 participates in a covalent cross-link: Glycyl lysine isopeptide (Lys-Gly) (interchain with G-Cter in SUMO1); alternate. Residue Lys-589 forms a Glycyl lysine isopeptide (Lys-Gly) (interchain with G-Cter in SUMO2); alternate linkage. A phosphoserine mark is found at Ser-591 and Ser-619. A Glycyl lysine isopeptide (Lys-Gly) (interchain with G-Cter in SUMO2) cross-link involves residue Lys-624. A disordered region spans residues Val-640–Glu-710. Position 646 is an N6-acetyllysine (Lys-646). Gly residues predominate over residues Glu-650–Gly-696. 9 positions are modified to asymmetric dimethylarginine: Arg-656, Arg-660, Arg-666, Arg-670, Arg-673, Arg-679, Arg-681, Arg-687, and Arg-691. At Arg-694 the chain carries Asymmetric dimethylarginine; alternate. Arg-694 carries the post-translational modification Omega-N-methylarginine; alternate. Basic and acidic residues predominate over residues Gly-697–Glu-710.

Identified in a IGF2BP1-dependent mRNP granule complex containing untranslated mRNAs. Component of the SWAP complex that consists of NPM1, NCL/nucleolin, PARP1 and SWAP70. Component of a complex which is at least composed of HTATSF1/Tat-SF1, the P-TEFb complex components CDK9 and CCNT1, RNA polymerase II, SUPT5H, and NCL/nucleolin. Interacts with AICDA. Interacts with APTX. Interacts with C1QBP. Interacts with ERBB4. Interacts (via C-terminus) with FMR1 isoform 6 (via N-terminus). Interacts with GZF1; this interaction is important for nucleolar localization of GZF1. Interacts with NSUN2. Interacts with NVL. Interacts (via N-terminus domain) with SETX. Interacts (via RRM1 and C-terminal RRM4/Arg/Gly-rich domains) with TERT; the interaction is important for nucleolar localization of TERT. Interacts with WDR46. Interacts with ZFP36. Interacts with LRRC34. Interacts with RRP1B. Interacts with HNRNPU; this interaction occurs during mitosis. Interacts with RIOK1; RIOK1 recruits NCL to PRMT5 for symmetrically methylation. Interacts with ZBTB7B. Interacts with MDK; this interaction promotes NCL clustering and lateral movements of this complex into lipid rafts leading to MDK internalization. Interacts with HDGF (isoform 1). Interacts with ALKBH2. Interacts with IGFBP5; this interaction is necessary for IGFBP5 localization to the nucleus. Interacts with DDX24 (when ubiquitinated); this interaction may be important during ribosome biogenesis. Post-translationally, some glutamate residues are glycylated by TTLL8. This modification occurs exclusively on glutamate residues and results in a glycine chain on the gamma-carboxyl group. In terms of processing, symmetrically methylated by PRMT5.

The protein localises to the nucleus. It is found in the nucleolus. The protein resides in the cytoplasm. Functionally, nucleolin is the major nucleolar protein of growing eukaryotic cells. It is found associated with intranucleolar chromatin and pre-ribosomal particles. It induces chromatin decondensation by binding to histone H1. It is thought to play a role in pre-rRNA transcription and ribosome assembly. May play a role in the process of transcriptional elongation. Binds RNA oligonucleotides with 5'-UUAGGG-3' repeats more tightly than the telomeric single-stranded DNA 5'-TTAGGG-3' repeats. The sequence is that of Nucleolin (NCL) from Homo sapiens (Human).